Consider the following 137-residue polypeptide: Neutral phospholipase A2 ammodytin I2 (137 aa).

Residues M1–G16 form the signal peptide. Cystine bridges form between C42-C131, C44-C60, C59-C111, C65-C137, C66-C104, C73-C97, and C91-C102. Residues Y43, G45, and G47 each contribute to the Ca(2+) site. Residue H63 is part of the active site. D64 contributes to the Ca(2+) binding site. D105 is a catalytic residue.

Belongs to the phospholipase A2 family. Group II subfamily. D49 sub-subfamily. The cofactor is Ca(2+). As to expression, expressed by the venom gland.

It is found in the secreted. It carries out the reaction a 1,2-diacyl-sn-glycero-3-phosphocholine + H2O = a 1-acyl-sn-glycero-3-phosphocholine + a fatty acid + H(+). In terms of biological role, snake venom phospholipase A2 (PLA2) that has enzymatic activity but is non-toxic. Displays low binding affinity and enzymatic activity on phosphatidylserine-containing vesicles and HEK-293 plasma membranes, in contrast to ammodytoxins that have high activity on these phospholipids. PLA2 catalyzes the calcium-dependent hydrolysis of the 2-acyl groups in 3-sn-phosphoglycerides. The chain is Neutral phospholipase A2 ammodytin I2 from Vipera ammodytes ammodytes (Western sand viper).